A 149-amino-acid polypeptide reads, in one-letter code: Large ribosomal subunit protein uL13 (149 aa).

It belongs to the universal ribosomal protein uL13 family. Part of the 50S ribosomal subunit.

In terms of biological role, this protein is one of the early assembly proteins of the 50S ribosomal subunit, although it is not seen to bind rRNA by itself. It is important during the early stages of 50S assembly. The sequence is that of Large ribosomal subunit protein uL13 from Chlorobium chlorochromatii (strain CaD3).